The sequence spans 245 residues: tRNA pseudouridine synthase A (245 aa).

Asp52 functions as the Nucleophile in the catalytic mechanism. Tyr112 contacts substrate.

Belongs to the tRNA pseudouridine synthase TruA family. Homodimer.

It catalyses the reaction uridine(38/39/40) in tRNA = pseudouridine(38/39/40) in tRNA. In terms of biological role, formation of pseudouridine at positions 38, 39 and 40 in the anticodon stem and loop of transfer RNAs. The sequence is that of tRNA pseudouridine synthase A from Dictyoglomus thermophilum (strain ATCC 35947 / DSM 3960 / H-6-12).